A 377-amino-acid chain; its full sequence is MIRGNDPILLTPGPLTTSLATKQAMLRDWGSWDAAFNTITRSLCDDLVRIVHGEGTHVCVPMQGSGTFSVEAAIANVVPRDGKVLVPQNGAYCQRILKICKVLGRASVELPIPEDQPASAALIEDALRRDPSITHVAQVHCETGAGVLNPLQDIALLCQRLGKGLIVDAMSSFGAIEIDARTMPFDALVAATGKCIEGVPGMGFVLVKKDVLEASQGNSHSLALDLHDQYVYMQKTTQWRFTPPTHVVAAFRAALDQFLEEGGQPVRGARYRRNCDTLVKGMAALGFRTFLPTAVQAPIIVTFHAPADARYDFKTFYAKVRERGYILYPGKLTQVETFRVGCIGAIDDNEMRNVVTAIGEVLREMGIEMQGRLAEAA.

Lys194 is modified (N6-(pyridoxal phosphate)lysine).

This sequence belongs to the class-V pyridoxal-phosphate-dependent aminotransferase family. PhnW subfamily. As to quaternary structure, homodimer. It depends on pyridoxal 5'-phosphate as a cofactor.

It catalyses the reaction (2-aminoethyl)phosphonate + pyruvate = phosphonoacetaldehyde + L-alanine. In terms of biological role, involved in phosphonate degradation. The polypeptide is 2-aminoethylphosphonate--pyruvate transaminase (Cupriavidus taiwanensis (strain DSM 17343 / BCRC 17206 / CCUG 44338 / CIP 107171 / LMG 19424 / R1) (Ralstonia taiwanensis (strain LMG 19424))).